Here is a 692-residue protein sequence, read N- to C-terminus: Elongation factor G (692 aa).

A tr-type G domain is found at 8-282 (AKTRNIGIMA…AVIAYLPSPL (275 aa)). GTP-binding positions include 17 to 24 (AHVDAGKT), 81 to 85 (DTPGH), and 135 to 138 (NKMD).

The protein belongs to the TRAFAC class translation factor GTPase superfamily. Classic translation factor GTPase family. EF-G/EF-2 subfamily.

The protein resides in the cytoplasm. Its function is as follows. Catalyzes the GTP-dependent ribosomal translocation step during translation elongation. During this step, the ribosome changes from the pre-translocational (PRE) to the post-translocational (POST) state as the newly formed A-site-bound peptidyl-tRNA and P-site-bound deacylated tRNA move to the P and E sites, respectively. Catalyzes the coordinated movement of the two tRNA molecules, the mRNA and conformational changes in the ribosome. This chain is Elongation factor G, found in Streptococcus equi subsp. zooepidemicus (strain MGCS10565).